We begin with the raw amino-acid sequence, 4717 residues long: Midasin (4717 aa).

AAA-ATPase protomer regions lie at residues 149 to 384, 458 to 797, 871 to 1131, 1157 to 1448, 1552 to 1811, and 1858 to 2106; these read LVQK…FGAF, EQLA…GLRR, EHYI…QEVI, SLKE…NACE, VLRA…EVFD, and VLES…FLLK. Residues 159 to 166 and 474 to 481 contribute to the ATP site; these read GPEGIGKK and GETGTGKT. The residue at position 593 (S593) is a Phosphoserine. ATP is bound by residues 901–908, 1193–1200, 1566–1573, and 1876–1883; these read GPTSSGKT, GDTGCGKT, GSPGVGKT, and GDTATGKT. The segment at 2173-3925 is linker; sequence KLLRKVLLTN…SGVGAEDITN (1753 aa). 3 disordered regions span residues 3898–3924, 3936–4283, and 4295–4365; these read PQEG…EDIT, LANE…LGDH, and EWED…EVGD. 2 stretches are compositionally biased toward acidic residues: residues 3936–3950 and 3973–3993; these read LANE…DLDE and ENSD…DIPE. Positions 4020–4030 are enriched in polar residues; it reads NEQSAANNESD. Basic and acidic residues predominate over residues 4031–4049; the sequence is LVSKEDDNKALEDKDRQEK. The span at 4050–4066 shows a compositional bias: acidic residues; that stretch reads EDEEEMSDDVGIDDEIQ. Positions 4080-4103 are enriched in basic and acidic residues; it reads NEDHLDLPEDLKLDEKEGDVSKDS. Composition is skewed to acidic residues over residues 4104–4177, 4184–4196, and 4226–4236; these read DLED…ESTE, EELE…EDQA, and ENEELGEEDGA. Composition is skewed to basic and acidic residues over residues 4258 to 4275 and 4329 to 4342; these read QKGE…EADR and AEKD…RDES. Polar residues predominate over residues 4343-4355; that stretch reads ANQNPDSMNSTNI. Residues 4505-4707 form the VWFA domain; that stretch reads QVMISIDDSK…ELPQLLSSAL (203 aa).

It belongs to the midasin family. In terms of assembly, associates with pre-60S ribosomes in the nucleoplasm.

It localises to the nucleus. The protein resides in the nucleolus. The protein localises to the nucleoplasm. Its function is as follows. Nuclear chaperone required for maturation and nuclear export of pre-60S ribosome subunits. Functions at successive maturation steps to remove ribosomal factors at critical transition points, first driving the exit of early pre-60S particles from the nucleolus and then driving late pre-60S particles from the nucleus. This Schizosaccharomyces pombe (strain 972 / ATCC 24843) (Fission yeast) protein is Midasin (mdn1).